Reading from the N-terminus, the 206-residue chain is Guanylate kinase (206 aa).

Residues 7 to 185 (GIVLVLCAPS…AYDELRAAYL (179 aa)) enclose the Guanylate kinase-like domain. 14-21 (APSGTGKT) serves as a coordination point for ATP.

It belongs to the guanylate kinase family.

The protein resides in the cytoplasm. It carries out the reaction GMP + ATP = GDP + ADP. Essential for recycling GMP and indirectly, cGMP. The protein is Guanylate kinase of Oleidesulfovibrio alaskensis (strain ATCC BAA-1058 / DSM 17464 / G20) (Desulfovibrio alaskensis).